The following is a 625-amino-acid chain: 1-deoxy-D-xylulose-5-phosphate synthase (625 aa).

Residues H80 and 121–123 contribute to the thiamine diphosphate site; that span reads GHS. D152 contributes to the Mg(2+) binding site. Residues 153–154, N181, Y290, and E371 contribute to the thiamine diphosphate site; that span reads GA. N181 contributes to the Mg(2+) binding site.

This sequence belongs to the transketolase family. DXPS subfamily. Homodimer. Mg(2+) serves as cofactor. Thiamine diphosphate is required as a cofactor.

The enzyme catalyses D-glyceraldehyde 3-phosphate + pyruvate + H(+) = 1-deoxy-D-xylulose 5-phosphate + CO2. Its pathway is metabolic intermediate biosynthesis; 1-deoxy-D-xylulose 5-phosphate biosynthesis; 1-deoxy-D-xylulose 5-phosphate from D-glyceraldehyde 3-phosphate and pyruvate: step 1/1. In terms of biological role, catalyzes the acyloin condensation reaction between C atoms 2 and 3 of pyruvate and glyceraldehyde 3-phosphate to yield 1-deoxy-D-xylulose-5-phosphate (DXP). This is 1-deoxy-D-xylulose-5-phosphate synthase from Haemophilus influenzae (strain 86-028NP).